A 460-amino-acid polypeptide reads, in one-letter code: Histidinol dehydrogenase (460 aa).

Substrate contacts are provided by Ser269, Gln291, and His294. Residues Gln291 and His294 each coordinate Zn(2+). Residues Glu358 and His359 each act as proton acceptor in the active site. 4 residues coordinate substrate: His359, Asp392, Glu446, and His451. A Zn(2+)-binding site is contributed by Asp392. Residue His451 participates in Zn(2+) binding.

This sequence belongs to the histidinol dehydrogenase family. Zn(2+) serves as cofactor.

The catalysed reaction is L-histidinol + 2 NAD(+) + H2O = L-histidine + 2 NADH + 3 H(+). It functions in the pathway amino-acid biosynthesis; L-histidine biosynthesis; L-histidine from 5-phospho-alpha-D-ribose 1-diphosphate: step 9/9. Catalyzes the sequential NAD-dependent oxidations of L-histidinol to L-histidinaldehyde and then to L-histidine. This chain is Histidinol dehydrogenase, found in Rhodopirellula baltica (strain DSM 10527 / NCIMB 13988 / SH1).